A 199-amino-acid polypeptide reads, in one-letter code: Golgi to ER traffic protein 1 (199 aa).

Residues 1–11 are Lumenal-facing; that stretch reads MLLPDLHPYTI. A helical transmembrane segment spans residues 12–31; the sequence is LLSIFIVLLLKQLVASIGKS. At 32-115 the chain is on the cytoplasmic side; the sequence is TIKEFVWLVY…SIDKVSNALL (84 aa). Positions 66–116 form a coiled coil; sequence EKRAISAQDEYAKWTKLNRQADKLSAELQKLNQEIQQQKASIDKVSNALLL. A helical membrane pass occupies residues 116–136; it reads LVLTTLPIWVARVLYRNTHLF. The Lumenal segment spans residues 137–160; it reads YIRQGIFPKYVEWVLALPFLPNGA. The chain crosses the membrane as a helical span at residues 161 to 177; it reads VGLTIWMFAVNSVVSNF. Residues 178–199 are Cytoplasmic-facing; sequence AFLVSFPFAKKVSKPVRDTKIE.

This sequence belongs to the WRB/GET1 family. Component of the Golgi to ER traffic (GET) complex, which is composed of GET1, GET2 and GET3. Within the complex, GET1 and GET2 form a heterotetramer which is stabilized by phosphatidylinositol binding and which binds to the GET3 homodimer.

It is found in the endoplasmic reticulum membrane. The protein resides in the golgi apparatus membrane. In terms of biological role, required for the post-translational delivery of tail-anchored (TA) proteins to the endoplasmic reticulum. Together with GET2, acts as a membrane receptor for soluble GET3, which recognizes and selectively binds the transmembrane domain of TA proteins in the cytosol. The GET complex cooperates with the HDEL receptor ERD2 to mediate the ATP-dependent retrieval of resident ER proteins that contain a C-terminal H-D-E-L retention signal from the Golgi to the ER. This chain is Golgi to ER traffic protein 1, found in Candida dubliniensis (strain CD36 / ATCC MYA-646 / CBS 7987 / NCPF 3949 / NRRL Y-17841) (Yeast).